The sequence spans 2157 residues: Genome polyprotein (2157 aa).

Glycine 2 carries N-myristoyl glycine; by host lipidation. Residues 2 to 1470 lie on the Cytoplasmic side of the membrane; sequence GAQVSRQNVG…DLSIANSIIT (1469 aa). Residues 567 to 584 are amphipathic alpha-helix; that stretch reads PIEQNPVENYIDEVLNEV. Residues histidine 875 and aspartate 892 each act as for protease 2A activity in the active site. Zn(2+) is bound by residues cysteine 909 and cysteine 911. Residue cysteine 963 is the For protease 2A activity of the active site. Residues cysteine 969 and histidine 971 each contribute to the Zn(2+) site. The segment at 1095-1164 is membrane-binding; sequence SDSWLKKFTE…NLRAADNATQ (70 aa). Positions 1095 to 1228 are oligomerization; it reads SDSWLKKFTE…PPGTGKSITT (134 aa). An RNA-binding region spans residues 1116–1120; the sequence is GNKIS. An SF3 helicase domain is found at 1188–1350; that stretch reads EAKRIKVLYN…YKDAQGKLNV (163 aa). The Zn(2+) site is built by cysteine 1357, cysteine 1368, and cysteine 1373. Residues 1357–1373 form a C4-type; degenerate zinc finger; it reads CNVNTKIGNAKCCPFVC. Residues 1400–1407 form an RNA-binding region; it reads EDKRRRQV. The tract at residues 1411 to 1416 is oligomerization; it reads MSAIFQ. The stretch at 1471–1486 is an intramembrane region; sequence IIANIISIAGIIFVIY. The Cytoplasmic segment spans residues 1487 to 2157; the sequence is KLFCTLQGPY…LLKHEWYEKF (671 aa). O-(5'-phospho-RNA)-tyrosine is present on tyrosine 1496. Residues 1515-1693 form the Peptidase C3 domain; it reads GPEEEFGRSI…FSAMLLRSYF (179 aa). Residues histidine 1554, glutamate 1585, and cysteine 1661 each act as for protease 3C activity in the active site. The 114-residue stretch at 1925 to 2038 folds into the RdRp catalytic domain; sequence DCIMAFDYTN…SYKYTLDMEA (114 aa). Mg(2+) contacts are provided by aspartate 1931 and aspartate 2024.

This sequence belongs to the picornaviruses polyprotein family. Interacts with capsid protein VP1 and capsid protein VP3 to form heterotrimeric protomers. As to quaternary structure, interacts with capsid protein VP0, and capsid protein VP3 to form heterotrimeric protomers. Five protomers subsequently associate to form pentamers which serve as building blocks for the capsid. Interacts with capsid protein VP2, capsid protein VP3 and capsid protein VP4 following cleavage of capsid protein VP0. In terms of assembly, interacts with capsid protein VP1 and capsid protein VP3 in the mature capsid. Interacts with capsid protein VP0 and capsid protein VP1 to form heterotrimeric protomers. Five protomers subsequently associate to form pentamers which serve as building blocks for the capsid. Interacts with capsid protein VP4 in the mature capsid. Interacts with protein 2C; this interaction may be important for virion morphogenesis. As to quaternary structure, interacts with capsid protein VP1 and capsid protein VP3. In terms of assembly, homodimer. Homohexamer; forms a hexameric ring structure with 6-fold symmetry characteristic of AAA+ ATPases. Interacts (via N-terminus) with host RTN3 (via reticulon domain); this interaction is important for viral replication. Interacts with capsid protein VP3; this interaction may be important for virion morphogenesis. As to quaternary structure, interacts with protein 3CD. In terms of assembly, homodimer. Interacts with host GBF1. Interacts (via GOLD domain) with host ACBD3 (via GOLD domain); this interaction allows the formation of a viral protein 3A/ACBD3 heterotetramer with a 2:2 stoichiometry, which will stimulate the recruitment of host PI4KB in order to synthesize PI4P at the viral RNA replication sites. Interacts with RNA-directed RNA polymerase. As to quaternary structure, interacts with protein 3AB and with RNA-directed RNA polymerase. In terms of assembly, interacts with Viral protein genome-linked and with protein 3CD. Mg(2+) is required as a cofactor. Post-translationally, specific enzymatic cleavages in vivo by the viral proteases yield processing intermediates and the mature proteins. In terms of processing, myristoylation is required for the formation of pentamers during virus assembly. Further assembly of 12 pentamers and a molecule of genomic RNA generates the provirion. During virion maturation, immature virions are rendered infectious following cleavage of VP0 into VP4 and VP2. This maturation seems to be an autocatalytic event triggered by the presence of RNA in the capsid and it is followed by a conformational change infectious virion. Post-translationally, myristoylation is required during RNA encapsidation and formation of the mature virus particle. In terms of processing, VPg is uridylylated by the polymerase into VPg-pUpU. This acts as a nucleotide-peptide primer for the genomic RNA replication.

It is found in the virion. It localises to the host cytoplasm. The protein localises to the host cytoplasmic vesicle membrane. The protein resides in the host nucleus. The catalysed reaction is a ribonucleoside 5'-triphosphate + H2O = a ribonucleoside 5'-diphosphate + phosphate + H(+). It carries out the reaction Selective cleavage of Tyr-|-Gly bond in the picornavirus polyprotein.. It catalyses the reaction RNA(n) + a ribonucleoside 5'-triphosphate = RNA(n+1) + diphosphate. The enzyme catalyses Selective cleavage of Gln-|-Gly bond in the poliovirus polyprotein. In other picornavirus reactions Glu may be substituted for Gln, and Ser or Thr for Gly.. Its activity is regulated as follows. Replication or transcription is subject to high level of random mutations by the nucleotide analog ribavirin. In terms of biological role, forms an icosahedral capsid of pseudo T=3 symmetry with capsid proteins VP2 and VP3. The capsid is 300 Angstroms in diameter, composed of 60 copies of each capsid protein and enclosing the viral positive strand RNA genome. Capsid protein VP1 mainly forms the vertices of the capsid. Capsid protein VP1 interacts with host cell receptor to provide virion attachment to target host cells. This attachment induces virion internalization. Tyrosine kinases are probably involved in the entry process. After binding to its receptor, the capsid undergoes conformational changes. Capsid protein VP1 N-terminus (that contains an amphipathic alpha-helix) and capsid protein VP4 are externalized. Together, they shape a pore in the host membrane through which viral genome is translocated to host cell cytoplasm. Forms an icosahedral capsid of pseudo T=3 symmetry with capsid proteins VP2 and VP3. The capsid is 300 Angstroms in diameter, composed of 60 copies of each capsid protein and enclosing the viral positive strand RNA genome. Functionally, lies on the inner surface of the capsid shell. After binding to the host receptor, the capsid undergoes conformational changes. Capsid protein VP4 is released, Capsid protein VP1 N-terminus is externalized, and together, they shape a pore in the host membrane through which the viral genome is translocated into the host cell cytoplasm. Its function is as follows. Component of immature procapsids, which is cleaved into capsid proteins VP4 and VP2 after maturation. Allows the capsid to remain inactive before the maturation step. In terms of biological role, cysteine protease that cleaves viral polyprotein and specific host proteins. It is responsible for the autocatalytic cleavage between the P1 and P2 regions, which is the first cleavage occurring in the polyprotein. Also cleaves the host translation initiation factor EIF4G1, in order to shut down the capped cellular mRNA translation. Inhibits the host nucleus-cytoplasm protein and RNA trafficking by cleaving host members of the nuclear pores. Counteracts stress granule formation probably by antagonizing its assembly or promoting its dissassembly. Plays an essential role in the virus replication cycle by acting as a viroporin. Creates a pore in the host endoplasmic reticulum and as a consequence releases Ca2+ in the cytoplasm of infected cell. In turn, high levels of cytoplasmic calcium may trigger membrane trafficking and transport of viral ER-associated proteins to viroplasms, sites of viral genome replication. Functionally, induces and associates with structural rearrangements of intracellular membranes. Displays RNA-binding, nucleotide binding and NTPase activities. May play a role in virion morphogenesis and viral RNA encapsidation by interacting with the capsid protein VP3. Its function is as follows. Localizes the viral replication complex to the surface of membranous vesicles. Together with protein 3CD binds the Cis-Active RNA Element (CRE) which is involved in RNA synthesis initiation. Acts as a cofactor to stimulate the activity of 3D polymerase, maybe through a nucleid acid chaperone activity. In terms of biological role, localizes the viral replication complex to the surface of membranous vesicles. It inhibits host cell endoplasmic reticulum-to-Golgi apparatus transport and causes the disassembly of the Golgi complex, possibly through GBF1 interaction. This would result in depletion of MHC, trail receptors and IFN receptors at the host cell surface. Plays an essential role in viral RNA replication by recruiting ACBD3 and PI4KB at the viral replication sites, thereby allowing the formation of the rearranged membranous structures where viral replication takes place. Acts as a primer for viral RNA replication and remains covalently bound to viral genomic RNA. VPg is uridylylated prior to priming replication into VPg-pUpU. The oriI viral genomic sequence may act as a template for this. The VPg-pUpU is then used as primer on the genomic RNA poly(A) by the RNA-dependent RNA polymerase to replicate the viral genome. During genome replication, the VPg-RNA linkage is removed by the host TDP2, thereby accelerating replication. During the late stage of the replication cycle, host TDP2 is excluded from sites of viral RNA synthesis and encapsidation, allowing for the generation of progeny virions. Functionally, involved in the viral replication complex and viral polypeptide maturation. It exhibits protease activity with a specificity and catalytic efficiency that is different from protease 3C. Protein 3CD lacks polymerase activity. Protein 3CD binds to the 5'UTR of the viral genome. Its function is as follows. Replicates the viral genomic RNA on the surface of intracellular membranes. May form linear arrays of subunits that propagate along a strong head-to-tail interaction called interface-I. Covalently attaches UMP to a tyrosine of VPg, which is used to prime RNA synthesis. The positive stranded RNA genome is first replicated at virus induced membranous vesicles, creating a dsRNA genomic replication form. This dsRNA is then used as template to synthesize positive stranded RNA genomes. ss(+)RNA genomes are either translated, replicated or encapsidated. In terms of biological role, major viral protease that mediates proteolytic processing of the polyprotein. Cleaves host EIF5B, contributing to host translation shutoff. Also cleaves host PABPC1, contributing to host translation shutoff. Cleaves host NLRP1, triggers host N-glycine-mediated degradation of the autoinhibitory NLRP1 N-terminal fragment. This Homo sapiens (Human) protein is Genome polyprotein.